The chain runs to 168 residues: Large ribosomal subunit protein bL9 (168 aa).

A disordered region spans residues 149 to 168 (QSFEEEPAPEAPAEEAEAAE). Positions 152–168 (EEEPAPEAPAEEAEAAE) are enriched in acidic residues.

Belongs to the bacterial ribosomal protein bL9 family.

In terms of biological role, binds to the 23S rRNA. This chain is Large ribosomal subunit protein bL9, found in Desulfovibrio desulfuricans (strain ATCC 27774 / DSM 6949 / MB).